The primary structure comprises 671 residues: K(+)-insensitive pyrophosphate-energized proton pump (671 aa).

5 consecutive transmembrane segments (helical) span residues 3–23 (SLIFIAPLAGVISLVFAAFFA), 57–77 (TIAVVSIILSFLILFLLDDGL), 79–99 (IAIGFLAGAISSAAAGYIGMS), 128–148 (AVTGLAVVGLALLGTSSFYIL), and 156–176 (VGFGFGASLISLFARVGGGIF). K178 lines the substrate pocket. Mg(2+) contacts are provided by D181, D185, N208, and D211. 6 consecutive transmembrane segments (helical) span residues 223 to 243 (LFETYVVTSLAAMLLGSLIIG), 249 to 269 (ILYPLVLGSVAIFASIISVFF), 285 to 305 (GVGGSAIISLIAFYFVTNSLM), 310 to 330 (LFYATVVGIIITVLMVIITEY), 366 to 386 (LVPTVVIVIGILISYFIVGGA), and 391 to 411 (IGLYGIAIAAVAMLSTTGMIV). D421 lines the Mg(2+) pocket. Transmembrane regions (helical) follow at residues 452–472 (AVTKGYAIGSAALGALALFAD), 490–510 (VVLAGLLLGALLPFVFSAVTM), 558–578 (MAMPGFLAVLVPLLVGLILGP), and 580–600 (ALAGLLIGLIVVGFMLALMMD). Ca(2+) is bound by residues D607, D633, and D637. Position 640 (K640) interacts with substrate. The helical transmembrane segment at 646-666 (ALNALIKVVNMVAILFSSLII) threads the bilayer.

This sequence belongs to the H(+)-translocating pyrophosphatase (TC 3.A.10) family. K(+)-insensitive subfamily. Homodimer. The cofactor is Mg(2+).

The protein localises to the cell membrane. It catalyses the reaction diphosphate + H2O + H(+)(in) = 2 phosphate + 2 H(+)(out). Proton pump that utilizes the energy of pyrophosphate hydrolysis as the driving force for proton movement across the membrane. Generates a proton motive force. The sequence is that of K(+)-insensitive pyrophosphate-energized proton pump from Methanosarcina acetivorans (strain ATCC 35395 / DSM 2834 / JCM 12185 / C2A).